The chain runs to 724 residues: Probable zinc transporter MSC2 (724 aa).

Residues 1-6 are Cytoplasmic-facing; sequence MNLQEL. Residues 7-27 traverse the membrane as a helical segment; that stretch reads LAKVPLLLSYPTIILSSNLIV. Over 28–58 the chain is Lumenal; that stretch reads PSHNDLISRAASTSAAEYADEKLIFFSTDHA. A helical membrane pass occupies residues 59 to 79; sequence IRLIFLPTFVASSFNLFAHYF. The Cytoplasmic portion of the chain corresponds to 80–90; it reads NFINYSSRRKY. Residues 91–111 form a helical membrane-spanning segment; it reads YVLFTAIYFLSILTAIFHPIQ. Residues 112–134 lie on the Lumenal side of the membrane; it reads STCITLLIIKLLTTADESSPKIA. Residues 135–155 traverse the membrane as a helical segment; sequence LNFKTILKTFVPFITLTLVIL. The Cytoplasmic portion of the chain corresponds to 156–174; the sequence is RWDPSFDASSGDVNKISTS. Residues 175–195 form a helical membrane-spanning segment; the sequence is LAAYALLILTLRYASPLILST. The Lumenal portion of the chain corresponds to 196–219; sequence LSSSIGVVSKDTSVAQHSISRNKR. Residues 220 to 240 traverse the membrane as a helical segment; it reads FPLILVLPIFSFVLLYLMTIV. The Cytoplasmic segment spans residues 241 to 244; the sequence is NKTY. The chain crosses the membrane as a helical span at residues 245–265; that stretch reads NIQLLMVFVFFGCLSIFFLSL. The Lumenal segment spans residues 266-298; it reads KDLFTEDGNQKKGGQEDEYCRMFDIKYMISYLW. A helical transmembrane segment spans residues 299 to 319; it reads LTRFTILLTGIMAIVVHFLSF. The Cytoplasmic segment spans residues 320–386; the sequence is NEITSSIKTD…KQMALNKDTR (67 aa). A helical transmembrane segment spans residues 387–407; the sequence is SIFSFLLLNTAFMFVQLLYSF. At 408–417 the chain is on the lumenal side; it reads RSKSLGLLSD. The helical transmembrane segment at 418–438 threads the bilayer; sequence SLHMALDCTSLLLGLIAGVLT. The Cytoplasmic portion of the chain corresponds to 439-453; the sequence is KKPASDKFPFGLNYL. Residues 454-474 traverse the membrane as a helical segment; the sequence is GTLAGFTNGVLLLGIVCGIFV. Residues 475–491 are Lumenal-facing; the sequence is EAIERIFNPIHLHATNE. Residues 492–512 form a helical membrane-spanning segment; the sequence is LLVVATLGLLVNLVGLFAFDH. The Cytoplasmic portion of the chain corresponds to 513–528; it reads GAHDHGGTDNENMKGI. A helical transmembrane segment spans residues 529-549; the sequence is FLHILADTLGSVGVVISTLLI. The Lumenal segment spans residues 550–563; sequence KLTHWPIFDPIASL. The chain crosses the membrane as a helical span at residues 564–584; sequence LIGSLILLSALPLLKSTSANI. Over 585–724 the chain is Cytoplasmic; it reads LLRLDDKKHN…NSLPLQPIAN (140 aa). The segment at 614–653 is disordered; it reads TPRFWPTESGSSGHSHAHTHSHAENHSHEHHHDQKNGSQE. Positions 634 to 648 are enriched in basic and acidic residues; sequence SHAENHSHEHHHDQK.

Belongs to the cation diffusion facilitator (CDF) transporter (TC 2.A.4) family. SLC30A subfamily.

Its subcellular location is the endoplasmic reticulum membrane. The protein resides in the nucleus membrane. Functionally, probably act as a zinc ion transporter moving zinc from the nucleus/endoplasmic reticulum to the cytoplasm. Involved in zinc ion homeostasis and cellular distribution. The sequence is that of Probable zinc transporter MSC2 (MSC2) from Saccharomyces cerevisiae (strain ATCC 204508 / S288c) (Baker's yeast).